Here is a 79-residue protein sequence, read N- to C-terminus: Sulfur carrier protein TusA (79 aa).

The active-site Cysteine persulfide intermediate is the Cys17.

This sequence belongs to the sulfur carrier protein TusA family.

Its subcellular location is the cytoplasm. In terms of biological role, sulfur carrier protein which probably makes part of a sulfur-relay system. The polypeptide is Sulfur carrier protein TusA (Haemophilus influenzae (strain ATCC 51907 / DSM 11121 / KW20 / Rd)).